The primary structure comprises 235 residues: Peroxynitrite isomerase 2 (235 aa).

Positions 82 to 88 (GVWRGEG) match the GXWXGXG motif. Positions 198 and 225 each coordinate heme b.

Belongs to the nitrobindin family. In terms of assembly, homodimer. Requires heme b as cofactor.

It carries out the reaction peroxynitrite = nitrate. It functions in the pathway nitrogen metabolism. Heme-binding protein able to scavenge peroxynitrite and to protect free L-tyrosine against peroxynitrite-mediated nitration, by acting as a peroxynitrite isomerase that converts peroxynitrite to nitrate. Therefore, this protein likely plays a role in peroxynitrite sensing and in the detoxification of reactive nitrogen and oxygen species (RNS and ROS, respectively). Is able to bind nitric oxide (NO) in vitro, but may act as a sensor of peroxynitrite levels in vivo. The chain is Peroxynitrite isomerase 2 from Mycolicibacterium paratuberculosis (strain ATCC BAA-968 / K-10) (Mycobacterium paratuberculosis).